Here is a 227-residue protein sequence, read N- to C-terminus: Cytochrome c oxidase subunit 2 (227 aa).

The Mitochondrial intermembrane portion of the chain corresponds to 1–14 (MAHPLQLGLQDASS). Residues 15–45 (PIMEELLYFHDHALMIVFLISSLVLYTISLM) traverse the membrane as a helical segment. At 46–59 (LTTKLMHTSTMNAQ) the chain is on the mitochondrial matrix side. The helical transmembrane segment at 60-87 (MVETMWTILPAVILTSIALPSLRILYMT) threads the bilayer. Topologically, residues 88 to 227 (DEINNPLLTI…HFETWSTLTS (140 aa)) are mitochondrial intermembrane. 6 residues coordinate Cu cation: His-161, Cys-196, Glu-198, Cys-200, His-204, and Met-207. Mg(2+) is bound at residue Glu-198.

It belongs to the cytochrome c oxidase subunit 2 family. As to quaternary structure, component of the cytochrome c oxidase (complex IV, CIV), a multisubunit enzyme composed of 14 subunits. The complex is composed of a catalytic core of 3 subunits MT-CO1, MT-CO2 and MT-CO3, encoded in the mitochondrial DNA, and 11 supernumerary subunits COX4I, COX5A, COX5B, COX6A, COX6B, COX6C, COX7A, COX7B, COX7C, COX8 and NDUFA4, which are encoded in the nuclear genome. The complex exists as a monomer or a dimer and forms supercomplexes (SCs) in the inner mitochondrial membrane with NADH-ubiquinone oxidoreductase (complex I, CI) and ubiquinol-cytochrome c oxidoreductase (cytochrome b-c1 complex, complex III, CIII), resulting in different assemblies (supercomplex SCI(1)III(2)IV(1) and megacomplex MCI(2)III(2)IV(2)). Found in a complex with TMEM177, COA6, COX18, COX20, SCO1 and SCO2. Interacts with TMEM177 in a COX20-dependent manner. Interacts with COX20. Interacts with COX16. Cu cation is required as a cofactor.

Its subcellular location is the mitochondrion inner membrane. The catalysed reaction is 4 Fe(II)-[cytochrome c] + O2 + 8 H(+)(in) = 4 Fe(III)-[cytochrome c] + 2 H2O + 4 H(+)(out). Functionally, component of the cytochrome c oxidase, the last enzyme in the mitochondrial electron transport chain which drives oxidative phosphorylation. The respiratory chain contains 3 multisubunit complexes succinate dehydrogenase (complex II, CII), ubiquinol-cytochrome c oxidoreductase (cytochrome b-c1 complex, complex III, CIII) and cytochrome c oxidase (complex IV, CIV), that cooperate to transfer electrons derived from NADH and succinate to molecular oxygen, creating an electrochemical gradient over the inner membrane that drives transmembrane transport and the ATP synthase. Cytochrome c oxidase is the component of the respiratory chain that catalyzes the reduction of oxygen to water. Electrons originating from reduced cytochrome c in the intermembrane space (IMS) are transferred via the dinuclear copper A center (CU(A)) of subunit 2 and heme A of subunit 1 to the active site in subunit 1, a binuclear center (BNC) formed by heme A3 and copper B (CU(B)). The BNC reduces molecular oxygen to 2 water molecules using 4 electrons from cytochrome c in the IMS and 4 protons from the mitochondrial matrix. The protein is Cytochrome c oxidase subunit 2 (MT-CO2) of Galeopterus variegatus (Malayan flying lemur).